A 433-amino-acid polypeptide reads, in one-letter code: Enolase (433 aa).

Residue Gln164 participates in (2R)-2-phosphoglycerate binding. Glu206 acts as the Proton donor in catalysis. Positions 243, 289, and 316 each coordinate Mg(2+). (2R)-2-phosphoglycerate-binding residues include Lys341, Arg370, Ser371, and Lys392. Catalysis depends on Lys341, which acts as the Proton acceptor.

Belongs to the enolase family. Requires Mg(2+) as cofactor.

The protein resides in the cytoplasm. It is found in the secreted. Its subcellular location is the cell surface. The enzyme catalyses (2R)-2-phosphoglycerate = phosphoenolpyruvate + H2O. The protein operates within carbohydrate degradation; glycolysis; pyruvate from D-glyceraldehyde 3-phosphate: step 4/5. Catalyzes the reversible conversion of 2-phosphoglycerate (2-PG) into phosphoenolpyruvate (PEP). It is essential for the degradation of carbohydrates via glycolysis. The polypeptide is Enolase (Borreliella burgdorferi (strain ATCC 35210 / DSM 4680 / CIP 102532 / B31) (Borrelia burgdorferi)).